We begin with the raw amino-acid sequence, 951 residues long: Serine/threonine-protein kinase ATG1 (951 aa).

In terms of domain architecture, Protein kinase spans 22–327; the sequence is FTINEEIGKG…FPEYFAHPVV (306 aa). ATP is bound by residues 28–36 and Lys-51; that span reads IGKGSFATV. Residue Asp-165 is the Proton acceptor of the active site. Disordered stretches follow at residues 343 to 375, 387 to 458, 514 to 573, and 924 to 951; these read IITPSRSPEASVARHPSLRERQRENPTPKPVET, EQAP…YDEQ, HIPK…SSPS, and HQSMPPPSSPRHSHSGGTTPTIANTPPH. Basic and acidic residues-rich tracts occupy residues 359–368 and 432–442; these read SLRERQRENP and PRQRDRTERHY. Polar residues-rich tracts occupy residues 547 to 573 and 939 to 951; these read AQGNTRPDTSSARNSYGSYGKTGSSPS and GGTTPTIANTPPH.

The protein belongs to the protein kinase superfamily. Ser/Thr protein kinase family. APG1/unc-51/ULK1 subfamily. Homodimer. Forms a ternary complex with ATG13 and ATG17.

It localises to the cytoplasm. The protein localises to the preautophagosomal structure membrane. It catalyses the reaction L-seryl-[protein] + ATP = O-phospho-L-seryl-[protein] + ADP + H(+). It carries out the reaction L-threonyl-[protein] + ATP = O-phospho-L-threonyl-[protein] + ADP + H(+). In terms of biological role, serine/threonine protein kinase involved in the cytoplasm to vacuole transport (Cvt) and found to be essential in autophagy, where it is required for the formation of autophagosomes. Involved in the clearance of protein aggregates which cannot be efficiently cleared by the proteasome. Required for selective autophagic degradation of the nucleus (nucleophagy) as well as for mitophagy which contributes to regulate mitochondrial quantity and quality by eliminating the mitochondria to a basal level to fulfill cellular energy requirements and preventing excess ROS production. Also involved in endoplasmic reticulum-specific autophagic process, in selective removal of ER-associated degradation (ERAD) substrates. Plays a key role in ATG9 and ATG23 cycling through the pre-autophagosomal structure and is necessary to promote ATG18 binding to ATG9 through phosphorylation of ATG9. Catalyzes phosphorylation of ATG4, decreasing the interaction between ATG4 and ATG8 and impairing deconjugation of PE-conjugated forms of ATG8. This is Serine/threonine-protein kinase ATG1 from Sclerotinia sclerotiorum (strain ATCC 18683 / 1980 / Ss-1) (White mold).